The following is a 408-amino-acid chain: D-galactonate dehydratase family member OG2516_05608 (408 aa).

Aspartate 215 provides a ligand contact to Mg(2+). D-arabinonate is bound at residue histidine 217. 2 residues coordinate Mg(2+): glutamate 241 and glutamate 267. Positions 267, 288, 317, and 344 each coordinate D-arabinonate.

It belongs to the mandelate racemase/muconate lactonizing enzyme family. GalD subfamily.

In terms of biological role, has no detectable activity with D-mannonate and with a panel of 70 other acid sugars (in vitro), in spite of the conservation of the residues that are expected to be important for catalytic activity and cofactor binding. May have evolved a divergent function. This Oceanicola granulosus (strain ATCC BAA-861 / DSM 15982 / KCTC 12143 / HTCC2516) protein is D-galactonate dehydratase family member OG2516_05608.